Reading from the N-terminus, the 412-residue chain is DnaJ homolog subfamily A member 2 (412 aa).

One can recognise a J domain in the interval 8 to 70 (KLYDILGVPP…EKRELYDRYG (63 aa)). Lysine 39 bears the N6-acetyllysine mark. Phosphoserine is present on residues serine 78 and serine 123. Residues 130 to 214 (GKTTKLQLSK…CEGKKVIKEV (85 aa)) form a CR-type zinc finger. Residue lysine 134 forms a Glycyl lysine isopeptide (Lys-Gly) (interchain with G-Cter in SUMO2) linkage. 2 residues coordinate Zn(2+): cysteine 143 and cysteine 146. The stretch at 143-150 (CSACSGQG) is one CXXCXGXG motif repeat. Lysine 152 carries the post-translational modification N6-acetyllysine. Zn(2+) is bound by residues cysteine 159, cysteine 162, cysteine 186, cysteine 189, cysteine 202, and cysteine 205. CXXCXGXG motif repeat units lie at residues 159 to 166 (CSACRGRG), 186 to 193 (CSDCNGEG), and 202 to 209 (CKKCEGKK). Positions 365–412 (IGETEEVELQEFDSTRGSGGGQRREAYNDSSDEESSSHHGPGVQCAHQ) are disordered. Residue tyrosine 391 is modified to Phosphotyrosine. 2 positions are modified to phosphoserine: serine 394 and serine 395. Cysteine 409 is modified (cysteine methyl ester). Cysteine 409 is lipidated: S-farnesyl cysteine. Positions 410-412 (AHQ) are cleaved as a propeptide — removed in mature form.

Its subcellular location is the membrane. In terms of biological role, co-chaperone of Hsc70. Stimulates ATP hydrolysis and the folding of unfolded proteins mediated by HSPA1A/B (in vitro). The protein is DnaJ homolog subfamily A member 2 (Dnaja2) of Mus musculus (Mouse).